We begin with the raw amino-acid sequence, 363 residues long: 3-isopropylmalate dehydrogenase (363 aa).

79–92 (GPKWEHLPPNDQPE) is an NAD(+) binding site. Positions 100, 110, 139, and 228 each coordinate substrate. Mg(2+) contacts are provided by Asp228, Asp252, and Asp256. Position 286 to 298 (286 to 298 (GSAPDIAGKNIAN)) interacts with NAD(+).

Belongs to the isocitrate and isopropylmalate dehydrogenases family. LeuB type 1 subfamily. As to quaternary structure, homodimer. The cofactor is Mg(2+). It depends on Mn(2+) as a cofactor.

The protein localises to the cytoplasm. It catalyses the reaction (2R,3S)-3-isopropylmalate + NAD(+) = 4-methyl-2-oxopentanoate + CO2 + NADH. Its pathway is amino-acid biosynthesis; L-leucine biosynthesis; L-leucine from 3-methyl-2-oxobutanoate: step 3/4. Its function is as follows. Catalyzes the oxidation of 3-carboxy-2-hydroxy-4-methylpentanoate (3-isopropylmalate) to 3-carboxy-4-methyl-2-oxopentanoate. The product decarboxylates to 4-methyl-2 oxopentanoate. This is 3-isopropylmalate dehydrogenase from Vibrio parahaemolyticus serotype O3:K6 (strain RIMD 2210633).